The chain runs to 233 residues: Phosphatidylserine decarboxylase proenzyme (233 aa).

The active-site Schiff-base intermediate with substrate; via pyruvic acid is S190. A Pyruvic acid (Ser); by autocatalysis modification is found at S190.

The protein belongs to the phosphatidylserine decarboxylase family. PSD-A subfamily. Heterodimer of a large membrane-associated beta subunit and a small pyruvoyl-containing alpha subunit. Pyruvate is required as a cofactor. Post-translationally, is synthesized initially as an inactive proenzyme. Formation of the active enzyme involves a self-maturation process in which the active site pyruvoyl group is generated from an internal serine residue via an autocatalytic post-translational modification. Two non-identical subunits are generated from the proenzyme in this reaction, and the pyruvate is formed at the N-terminus of the alpha chain, which is derived from the carboxyl end of the proenzyme. The post-translation cleavage follows an unusual pathway, termed non-hydrolytic serinolysis, in which the side chain hydroxyl group of the serine supplies its oxygen atom to form the C-terminus of the beta chain, while the remainder of the serine residue undergoes an oxidative deamination to produce ammonia and the pyruvoyl prosthetic group on the alpha chain.

It is found in the cell membrane. It catalyses the reaction a 1,2-diacyl-sn-glycero-3-phospho-L-serine + H(+) = a 1,2-diacyl-sn-glycero-3-phosphoethanolamine + CO2. Its pathway is phospholipid metabolism; phosphatidylethanolamine biosynthesis; phosphatidylethanolamine from CDP-diacylglycerol: step 2/2. Catalyzes the formation of phosphatidylethanolamine (PtdEtn) from phosphatidylserine (PtdSer). This Xanthobacter autotrophicus (strain ATCC BAA-1158 / Py2) protein is Phosphatidylserine decarboxylase proenzyme.